Here is a 105-residue protein sequence, read N- to C-terminus: Small ribosomal subunit protein uS10 (105 aa).

Belongs to the universal ribosomal protein uS10 family. As to quaternary structure, part of the 30S ribosomal subunit.

Involved in the binding of tRNA to the ribosomes. The protein is Small ribosomal subunit protein uS10 of Rickettsia peacockii (strain Rustic).